The primary structure comprises 237 residues: MRKKLKWLSFLLGFIILLFLFKYQFSNNDSWKPWSLPLSGKIIYLDPGHGGPDGGAVGGKLLEKDVTLEVAFRVRDYLQEQGALVIMTRESDTDLAPEGTKGYSRRKAEDLRQRVKLINHSEAELYISIHLNAIPSQKWSGAQSFYYGKYAENEKVAKYIQDELRRNLENTTRKAKRIHGIYLMQNVTKPGALIEVGFLSNPSEATLLGKPKYQDKVASSIYKGILRYFTEKGDPPE.

An N-terminal signal peptide occupies residues 1–27; sequence MRKKLKWLSFLLGFIILLFLFKYQFSN. The region spanning 43–226 is the MurNAc-LAA domain; it reads IYLDPGHGGP…VASSIYKGIL (184 aa).

It belongs to the N-acetylmuramoyl-L-alanine amidase 3 family.

Its subcellular location is the secreted. It catalyses the reaction Hydrolyzes the link between N-acetylmuramoyl residues and L-amino acid residues in certain cell-wall glycopeptides.. In terms of biological role, cleaves the peptide side chain from the N-acetylmuramic acid residues in peptidoglycan. This is a step in the formation of muramic delta-lactam residues in spore cortex. The polypeptide is Germination-specific N-acetylmuramoyl-L-alanine amidase (cwlD) (Bacillus subtilis (strain 168)).